The following is an 801-amino-acid chain: Protein ACCUMULATION AND REPLICATION OF CHLOROPLASTS 6, chloroplastic (801 aa).

The N-terminal 67 residues, 1–67 (MEALSHVGIG…SSSFATATTT (67 aa)), are a transit peptide targeting the chloroplast. At 68–618 (ATLVSPPPSI…ADMLKEASVK (551 aa)) the chain is on the stromal side. One can recognise a J domain in the interval 89–153 (DFYQVLGAQT…RSRREYNEGL (65 aa)). Residues 619–638 (ILAAGVAIGLISLFSQKYFL) traverse the membrane as a helical segment. Residues 639-801 (KSSSSFQRKD…KITEGSVLAS (163 aa)) are Chloroplast intermembrane-facing. An interaction with PDV2 region spans residues 639–801 (KSSSSFQRKD…KITEGSVLAS (163 aa)).

As to quaternary structure, self-interacts. Part of a complex made of ARC3, ARC6, FTSZ1 and FTSZ2. Interacts with FTSZ2-1 and FTSZ2-2 (via C-terminus), but not with FTSZ1; this interaction enables ARC3 binding to FTSZ2. Binds to CDT1A. Interacts (via C-terminus) with PDV2 (via C-terminus) in the chloroplast intermembrane space; this interaction induces homodimerization and leads to the formation of a heterotetramer containing two ARC6 and two PDV2 subunits. Interacts with MCD1 in the chloroplast stroma and facilitates its subsequent binding to FtsZ2-1. Interacts (via J domain) with CJD1 (via J-like domain). As to expression, mostly expressed in young leaves.

The protein resides in the plastid. Its subcellular location is the chloroplast inner membrane. Its function is as follows. Component of the plastid division machinery consisting in a binary fission accomplished by the simultaneous constriction of the FtsZ ring on the stromal side of the inner envelope membrane, and the ARC5 ring on the cytosolic side of the outer envelope membrane. Involved in the initiation of proplastid and plastid division (including chloroplasts, statoliths and leukoplasts). Promotes the assembly and/or stabilization of the plastid-dividing FtsZ ring, functioning as an antagonistic regulator of FtsZ dynamics against CDP1 and facilitating MCD1 positioning to membrane tethered FtsZ filaments to form the chloroplast Z-Ring; inhibits GDP-induced disassembly of FTSZ2 but enables ARC3 binding to FTSZ2-1. Relays plastid division site position between stroma and outer surface via interactions with the stromal FtsZ ring and the outer membrane PDV2 that recruits cytoplasmic ARC5 ring. Required for plastid equatorial positioning of PDV2 and ARC5. May contribute to gravitropism in stems and hypocotyls. Seems to influence stromule (stroma-filled tubular extensions of the plastid envelope membrane) length and frequency. This Arabidopsis thaliana (Mouse-ear cress) protein is Protein ACCUMULATION AND REPLICATION OF CHLOROPLASTS 6, chloroplastic.